Reading from the N-terminus, the 693-residue chain is MAREFSLEKTRNIGIMAHVDAGKTTTTERILYYTGKIHKIGETHEGASQMDWMEQEQERGITITSAATTAQWNNHRVNIIDTPGHVDFTIEVQRSLRVLDGAVTVLDSQSGVEPQTETVWRQATEYGVPRIVFANKMDKIGADFLYSVSTLHDRLQANAHPIQLPIGSEDDFRGIIDLIKMKAEIYTNDLGTDILEEDIPAEYLDQAQEYREKLVEAVAETDEELMMKYLEGEEITNEELKAGIRKATINVEFFPVLCGSAFKNKGVQLMLDAVIDYLPSPLDIPAIKGINPDTDEEETRPASDEEPFAALAFKIMTDPFVGRLTFFRVYSGVLQSGSYVLNTSKGKRERIGRILQMHANSRQEIDTVYSGDIAAAVGLKDTTTGDSLTDEKAKIILESINVPEPVIQLMVEPKSKADQDKMGIALQKLAEEDPTFRVETNVETGETVISGMGELHLDVLVDRMRREFKVEANVGAPQVSYRETFRASTQARGFFKRQSGGKGQFGDVWIEFTPNEEGKGFEFENAIVGGVVPREFIPAVEKGLVESMANGVLAGYPMVDVKAKLYDGSYHDVDSSETAFKIAASLALKEAAKSAQPAILEPMMLVTITVPEENLGDVMGHVTARRGRVDGMEAHGNSQIVRAYVPLAEMFGYATVLRSASQGRGTFMMVFDHYEDVPKSVQEEIIKKNKGED.

The region spanning 8–282 (EKTRNIGIMA…AVIDYLPSPL (275 aa)) is the tr-type G domain. GTP contacts are provided by residues 17-24 (AHVDAGKT), 81-85 (DTPGH), and 135-138 (NKMD).

It belongs to the TRAFAC class translation factor GTPase superfamily. Classic translation factor GTPase family. EF-G/EF-2 subfamily.

The protein resides in the cytoplasm. In terms of biological role, catalyzes the GTP-dependent ribosomal translocation step during translation elongation. During this step, the ribosome changes from the pre-translocational (PRE) to the post-translocational (POST) state as the newly formed A-site-bound peptidyl-tRNA and P-site-bound deacylated tRNA move to the P and E sites, respectively. Catalyzes the coordinated movement of the two tRNA molecules, the mRNA and conformational changes in the ribosome. The sequence is that of Elongation factor G from Streptococcus pneumoniae (strain ATCC 700669 / Spain 23F-1).